We begin with the raw amino-acid sequence, 917 residues long: Hexokinase HKDC1 (917 aa).

Residues M1 to K20 form a mitochondrial-binding peptide (MBP) region. Hexokinase domains are found at residues E16 to A458 and Q464 to A905. Residues R30 and D84–K89 each bind ATP. Positions D73 to V207 are hexokinase small subdomain 1. D84–R91 provides a ligand contact to D-glucose 6-phosphate. D-glucose is bound by residues S155, T172 to K173, and N208 to D209. The segment at N208–S447 is hexokinase large subdomain 1. D209 and T232 together coordinate D-glucose 6-phosphate. D-glucose is bound by residues N235, E260, and Q291 to E294. D413 to T415 contacts D-glucose 6-phosphate. An ATP-binding site is contributed by K425–R426. Residues S449 and D532–T536 contribute to the D-glucose 6-phosphate site. The interval D521 to V654 is hexokinase small subdomain 2. D532–N537 is an ATP binding site. Residues S602–F603, T619–K620, and N655–D656 contribute to the D-glucose site. A hexokinase large subdomain 2 region spans residues N655 to D894. D656 and T679 together coordinate D-glucose 6-phosphate. T679 contacts ATP. D-glucose contacts are provided by residues S681–N682, E707, and E741. ATP is bound by residues G746–M747, T783–S787, and T862–L866. Residues D860–T862 and S896 contribute to the D-glucose 6-phosphate site.

Belongs to the hexokinase family. In terms of tissue distribution, widely expressed. Highly expressed in the brush border, surface epithelium and the myenteric plexus of the small and large intestines; the acinar centrocytes and interlobular ducts of the pancreas; and the alveolar macrophages in the lungs (at protein level). Present at moderate level in the thyroid follicular epithelium (at protein level).

Its subcellular location is the cytoplasm. It is found in the mitochondrion membrane. The protein resides in the photoreceptor inner segment. The enzyme catalyses a D-hexose + ATP = a D-hexose 6-phosphate + ADP + H(+). The catalysed reaction is D-glucose + ATP = D-glucose 6-phosphate + ADP + H(+). It participates in carbohydrate metabolism; hexose metabolism. The protein operates within carbohydrate degradation; glycolysis; D-glyceraldehyde 3-phosphate and glycerone phosphate from D-glucose: step 1/4. Its function is as follows. Catalyzes the phosphorylation of hexose to hexose 6-phosphate, although at very low level compared to other hexokinases. Has low glucose phosphorylating activity compared to other hexokinases. Involved in glucose homeostasis and hepatic lipid accumulation. Required to maintain whole-body glucose homeostasis during pregnancy; however additional evidences are required to confirm this role. The polypeptide is Hexokinase HKDC1 (Homo sapiens (Human)).